A 426-amino-acid chain; its full sequence is uncharacterized protein (426 aa).

Residues 23 to 42 (ENPRPTNNPSTSHPSDSYST) form a disordered region. Positions 26 to 42 (RPTNNPSTSHPSDSYST) are enriched in polar residues.

The protein belongs to the serpin family.

This is an uncharacterized protein from Thermococcus kodakarensis (strain ATCC BAA-918 / JCM 12380 / KOD1) (Pyrococcus kodakaraensis (strain KOD1)).